A 491-amino-acid chain; its full sequence is Chromosomal replication initiator protein DnaA (491 aa).

Residues 1–68 form a domain I, interacts with DnaA modulators region; that stretch reads MTSIWGQIQH…RTAACGVIGD (68 aa). The domain II stretch occupies residues 68–146; that stretch reads DTVEVVVTAG…PLDWAPVPQS (79 aa). The interval 147 to 364 is domain III, AAA+ region; that stretch reads RTNWRFSFDD…SCLHNLILKA (218 aa). ATP contacts are provided by Gly-190, Gly-192, Lys-193, and Thr-194. The interval 365-491 is domain IV, binds dsDNA; that stretch reads KLLNRQISLE…RNGRITHARH (127 aa).

It belongs to the DnaA family. As to quaternary structure, oligomerizes as a right-handed, spiral filament on DNA at oriC.

Its subcellular location is the cytoplasm. Functionally, plays an essential role in the initiation and regulation of chromosomal replication. ATP-DnaA binds to the origin of replication (oriC) to initiate formation of the DNA replication initiation complex once per cell cycle. Binds the DnaA box (a 9 base pair repeat at the origin) and separates the double-stranded (ds)DNA. Forms a right-handed helical filament on oriC DNA; dsDNA binds to the exterior of the filament while single-stranded (ss)DNA is stabiized in the filament's interior. The ATP-DnaA-oriC complex binds and stabilizes one strand of the AT-rich DNA unwinding element (DUE), permitting loading of DNA polymerase. After initiation quickly degrades to an ADP-DnaA complex that is not apt for DNA replication. Binds acidic phospholipids. The protein is Chromosomal replication initiator protein DnaA of Nitratidesulfovibrio vulgaris (strain ATCC 29579 / DSM 644 / CCUG 34227 / NCIMB 8303 / VKM B-1760 / Hildenborough) (Desulfovibrio vulgaris).